A 263-amino-acid chain; its full sequence is Palmitoyltransferase ZDHHC22 (263 aa).

Residues 1 to 9 (MLALRLLNV) lie on the Cytoplasmic side of the membrane. A helical transmembrane segment spans residues 10–30 (VAPAYFLCISLVTFVLQLFLF). At 31 to 47 (LPSMREDPTATPLFSPA) the chain is on the lumenal side. A helical transmembrane segment spans residues 48–68 (VLHGALFLFLSANALGNYILV). Residues 69 to 125 (VQNSPDDLGACQGTSSQRPQRPPPSTHFCRVCARVTLRHDHHCFFTGNCIGSRNMRN) are Cytoplasmic-facing. A DHHC domain is found at 91–131 (PPSTHFCRVCARVTLRHDHHCFFTGNCIGSRNMRNFILFCL). C111 acts as the S-palmitoyl cysteine intermediate in catalysis. A run of 2 helical transmembrane segments spans residues 126 to 146 (FILF…AGVA) and 147 to 167 (YISA…TLLP). At 168 to 182 (TSISQFFSGAVLGSD) the chain is on the cytoplasmic side. Residues 183-203 (MFVILMLYLWFAVGLACAGFC) form a helical membrane-spanning segment. Topologically, residues 204–263 (CHQLLLILRGQTRYQVRKGVAVRARPWRKNLQEVFGKRWLLGLLVPMFNVGTESSKQQDK) are lumenal.

Belongs to the DHHC palmitoyltransferase family. Interacts with CNN3.

It localises to the endoplasmic reticulum membrane. Its subcellular location is the golgi apparatus membrane. It carries out the reaction L-cysteinyl-[protein] + hexadecanoyl-CoA = S-hexadecanoyl-L-cysteinyl-[protein] + CoA. Functionally, palmitoyltransferase that could catalyze the addition of palmitate onto various protein substrates and be involved in a variety of cellular processes. Catalyzes the palmitoylation of KCNMA1, regulating localization of KCNMA1 to the plasma membrane. Might also mediate palmitoylation of CNN3. The protein is Palmitoyltransferase ZDHHC22 of Rattus norvegicus (Rat).